The primary structure comprises 344 residues: UDP-galactose/UDP-glucose transporter 5B (344 aa).

A run of 8 helical transmembrane segments spans residues 16–36 (LWKG…YGVL), 56–76 (LFLV…ALLA), 115–135 (VQTL…TLIM), 142–162 (FDYL…LFPA), 176–196 (TVWG…TSTF), 220–240 (CVLS…VDFV), 246–266 (CLLD…FISY), and 292–312 (CIWF…IVFG). The segment at 324-344 (KNSQTQPPPPELPQYEKVESS) is disordered.

This sequence belongs to the nucleotide-sugar transporter family. UDP-galactose:UMP antiporter (TC 2.A.7.11) subfamily.

It is found in the membrane. Sugar transporter involved in the transport of nucleotide-sugars from cytoplasm into the Golgi and/or the endoplasmic reticulum. The sequence is that of UDP-galactose/UDP-glucose transporter 5B from Arabidopsis thaliana (Mouse-ear cress).